The sequence spans 104 residues: Large ribosomal subunit protein eL36 (104 aa).

Belongs to the eukaryotic ribosomal protein eL36 family.

The polypeptide is Large ribosomal subunit protein eL36 (RPL36) (Tetrahymena thermophila (strain SB210)).